The sequence spans 452 residues: General transcription and DNA repair factor IIH subunit TFB2 (452 aa).

The protein belongs to the TFB2 family. As to quaternary structure, component of the 7-subunit TFIIH core complex composed of XPB, XPD, TFB1/GTF2H1, GTF2H2/P44, TFB4/GTF2H3, TFB2/GTF2H4 and TFB5/GTF2H5, which is active in NER. The core complex associates with the 3-subunit CDK-activating kinase (CAK) module composed of CYCH1/cyclin H1, CDKD and MAT1/At4g30820 to form the 10-subunit holoenzyme (holo-TFIIH) active in transcription.

The protein localises to the nucleus. Its function is as follows. Component of the general transcription and DNA repair factor IIH (TFIIH) core complex, which is involved in general and transcription-coupled nucleotide excision repair (NER) of damaged DNA and, when complexed to CAK, in RNA transcription by RNA polymerase II. In NER, TFIIH acts by opening DNA around the lesion to allow the excision of the damaged oligonucleotide and its replacement by a new DNA fragment. In transcription, TFIIH has an essential role in transcription initiation. When the pre-initiation complex (PIC) has been established, TFIIH is required for promoter opening and promoter escape. Phosphorylation of the C-terminal tail (CTD) of the largest subunit of RNA polymerase II by the kinase module CAK controls the initiation of transcription. In Arabidopsis thaliana (Mouse-ear cress), this protein is General transcription and DNA repair factor IIH subunit TFB2.